A 355-amino-acid chain; its full sequence is Erythronate-4-phosphate dehydrogenase (355 aa).

The substrate site is built by Ser45 and Thr66. Asp146 contacts NAD(+). Residue Arg206 is part of the active site. Position 229 (Asp229) interacts with NAD(+). Residue Glu234 is part of the active site. His251 functions as the Proton donor in the catalytic mechanism. Position 254 (Gly254) interacts with NAD(+). Tyr255 serves as a coordination point for substrate.

Belongs to the D-isomer specific 2-hydroxyacid dehydrogenase family. PdxB subfamily. As to quaternary structure, homodimer.

Its subcellular location is the cytoplasm. It carries out the reaction 4-phospho-D-erythronate + NAD(+) = (R)-3-hydroxy-2-oxo-4-phosphooxybutanoate + NADH + H(+). Its pathway is cofactor biosynthesis; pyridoxine 5'-phosphate biosynthesis; pyridoxine 5'-phosphate from D-erythrose 4-phosphate: step 2/5. Catalyzes the oxidation of erythronate-4-phosphate to 3-hydroxy-2-oxo-4-phosphonooxybutanoate. This is Erythronate-4-phosphate dehydrogenase from Acinetobacter baumannii (strain ATCC 17978 / DSM 105126 / CIP 53.77 / LMG 1025 / NCDC KC755 / 5377).